The following is a 129-amino-acid chain: Histone H2A.J (129 aa).

Residues 1-22 (MSGRGKQGGKVRAKAKSRSSRA) are disordered. Serine 2 is modified (N-acetylserine). Serine 2 carries the phosphoserine modification. At lysine 6 the chain carries N6-acetyllysine. The segment covering 7–19 (QGGKVRAKAKSRS) has biased composition (basic residues). Residue lysine 10 is modified to N6-lactoyllysine; alternate. Glycyl lysine isopeptide (Lys-Gly) (interchain with G-Cter in ubiquitin) cross-links involve residues lysine 14 and lysine 16. N5-methylglutamine is present on glutamine 105. Lysine 120 is covalently cross-linked (Glycyl lysine isopeptide (Lys-Gly) (interchain with G-Cter in ubiquitin)).

The protein belongs to the histone H2A family. In terms of assembly, the nucleosome is a histone octamer containing two molecules each of H2A, H2B, H3 and H4 assembled in one H3-H4 heterotetramer and two H2A-H2B heterodimers. The octamer wraps approximately 147 bp of DNA. Monoubiquitination of Lys-120 (H2AXK119ub) gives a specific tag for epigenetic transcriptional repression. Following DNA double-strand breaks (DSBs), it is ubiquitinated through 'Lys-63' linkage of ubiquitin moieties. Post-translationally, phosphorylation on Ser-2 is enhanced during mitosis. Phosphorylation on Ser-2 directly represses transcription.

The protein localises to the nucleus. Its subcellular location is the chromosome. Core component of nucleosome. Nucleosomes wrap and compact DNA into chromatin, limiting DNA accessibility to the cellular machineries which require DNA as a template. Histones thereby play a central role in transcription regulation, DNA repair, DNA replication and chromosomal stability. DNA accessibility is regulated via a complex set of post-translational modifications of histones, also called histone code, and nucleosome remodeling. The chain is Histone H2A.J (H2A-IX) from Gallus gallus (Chicken).